Reading from the N-terminus, the 166-residue chain is Interferon gamma (166 aa).

The N-terminal stretch at 1 to 23 (MKYTSYFLALQLCLLLGFSGSYG) is a signal peptide. Q24 bears the Pyrrolidone carboxylic acid mark. Residues N39 and N106 are each glycosylated (N-linked (GlcNAc...) asparagine).

It belongs to the type II (or gamma) interferon family. As to quaternary structure, homodimer. Interacts with IFNGR1 (via extracellular domain); this interaction promotes IFNGR1 dimerization. As to expression, released primarily from activated T lymphocytes.

The protein localises to the secreted. Functionally, type II interferon produced by immune cells such as T-cells and NK cells that plays crucial roles in antimicrobial, antiviral, and antitumor responses by activating effector immune cells and enhancing antigen presentation. Primarily signals through the JAK-STAT pathway after interaction with its receptor IFNGR1 to affect gene regulation. Upon IFNG binding, IFNGR1 intracellular domain opens out to allow association of downstream signaling components JAK2, JAK1 and STAT1, leading to STAT1 activation, nuclear translocation and transcription of IFNG-regulated genes. Many of the induced genes are transcription factors such as IRF1 that are able to further drive regulation of a next wave of transcription. Plays a role in class I antigen presentation pathway by inducing a replacement of catalytic proteasome subunits with immunoproteasome subunits. In turn, increases the quantity, quality, and repertoire of peptides for class I MHC loading. Increases the efficiency of peptide generation also by inducing the expression of activator PA28 that associates with the proteasome and alters its proteolytic cleavage preference. Up-regulates as well MHC II complexes on the cell surface by promoting expression of several key molecules such as cathepsins B/CTSB, H/CTSH, and L/CTSL. Participates in the regulation of hematopoietic stem cells during development and under homeostatic conditions by affecting their development, quiescence, and differentiation. In Moschus berezovskii (Chinese forest musk deer), this protein is Interferon gamma (IFNG).